A 318-amino-acid polypeptide reads, in one-letter code: Probable endolytic peptidoglycan transglycosylase RlpA (318 aa).

Residues 1 to 21 (MMDKRVVAVAAVLWNVQMLFA) form the signal peptide. The disordered stretch occupies residues 121-191 (DPNAHASQQR…GVANTTDVPA (71 aa)). Over residues 125–137 (HASQQRNDRQTSP) the composition is skewed to polar residues.

It belongs to the RlpA family.

Functionally, lytic transglycosylase with a strong preference for naked glycan strands that lack stem peptides. The polypeptide is Probable endolytic peptidoglycan transglycosylase RlpA (Treponema pallidum (strain Nichols)).